Consider the following 65-residue polypeptide: Large ribosomal subunit protein bL35 (65 aa).

A disordered region spans residues 1-22 (MPKMKTKSSAKKRFKVTGSGKI).

It belongs to the bacterial ribosomal protein bL35 family.

This is Large ribosomal subunit protein bL35 from Flavobacterium johnsoniae (strain ATCC 17061 / DSM 2064 / JCM 8514 / BCRC 14874 / CCUG 350202 / NBRC 14942 / NCIMB 11054 / UW101) (Cytophaga johnsonae).